Here is a 420-residue protein sequence, read N- to C-terminus: MKSYFMQPLRGTKDILPNEINYWHHIHDKALTILSLHNYSEIRTPIIESTSLFKRSIGETSDIINKEMYTFTDQGDRSITLRPEATASIARAFISNKLYHSNIQRLWYLGPMFRYERPQSGRQRQFHQLGIECIGSINPMADTEVIHLANQLLKELQVKNYILEINSIGTLEERQSYKLDLVEYLSQYQQDLDQDSKNRMYSNPLRILDSKNLKTQEILDGAPKLKKYLNKRSTEHFYLVCTYLNNLNITYKINYKLVRGLDYYNQTAFEIKTNSKNSQNTICGGGRYDTLIEQLGGPKTPAVGWAIGIERLLKIIEDKLILPKQKINVYIATQGLAAQKKIWEIIQALEKKNIKFELDLSNTSFHKQIKKAGKLGAKFCIILGDQEIMDNCVTIKRLDEYVQYTAQYSNFLQEIHKLQH.

This sequence belongs to the class-II aminoacyl-tRNA synthetase family.

The protein resides in the plastid. Its subcellular location is the chloroplast. The enzyme catalyses tRNA(His) + L-histidine + ATP = L-histidyl-tRNA(His) + AMP + diphosphate + H(+). In Gracilaria tenuistipitata var. liui (Red alga), this protein is Histidine--tRNA ligase, chloroplastic.